A 973-amino-acid polypeptide reads, in one-letter code: EF-hand calcium-binding domain-containing protein 13 (973 aa).

Residues 384–448 (YSKNGINFKK…HSSLQKQVSS (65 aa)) form a disordered region. The segment covering 396-405 (EKGEIHDSKS) has biased composition (basic and acidic residues). The span at 406 to 418 (KPQSLKSSTSLSK) shows a compositional bias: low complexity. EF-hand domains lie at 488–523 (LLDEEFQKIVTDTSRNENGMVELDDFVNALAKERSF), 524–559 (PECNALPGVIKAIDKIKDKNVDYEDLNTCLQNFGIY), 633–668 (LKKDEFLAALELVTVDEGDKVQFEEFAKVVRNMRDA), 756–791 (PKVNEIKEAANILSHVDNGKIGIPDLEHALKCLNVN), 792–827 (LTEEDFNEALNCCNVSDNMEVDLKDFLMKMKESPHF), and 864–899 (TANAILTVMLRHVPEHESGKVSIQEFMTKLSDILTI).

The polypeptide is EF-hand calcium-binding domain-containing protein 13 (EFCAB13) (Homo sapiens (Human)).